The chain runs to 738 residues: Vesicle-fusing ATPase (738 aa).

Residues Asn-507–Tyr-512 and Pro-547–Leu-554 contribute to the ATP site.

It belongs to the AAA ATPase family. In terms of assembly, interacts with syn7A, snpA and snpC. It depends on Mg(2+) as a cofactor.

It localises to the cytoplasmic vesicle membrane. It is found in the endosome membrane. The catalysed reaction is ATP + H2O = ADP + phosphate + H(+). Its function is as follows. Required for vesicle-mediated transport. Involved in endocytosis and endosome-endosome fusion. May be required for transport from the endoplasmic reticulum to the Golgi stack, and for the fusion of transport vesicles within the Golgi cisternae. Required for cell polarity, locomotion and chemotaxis. The polypeptide is Vesicle-fusing ATPase (nsfA) (Dictyostelium discoideum (Social amoeba)).